Here is a 518-residue protein sequence, read N- to C-terminus: Ethanolamine kinase (518 aa).

Over residues 1–19 (MGTETKSNSYTGQISTSGG) the composition is skewed to polar residues. The tract at residues 1–88 (MGTETKSNSY…DIRAKPEDKS (88 aa)) is disordered. A compositionally biased stretch (low complexity) spans 33–68 (QTVNQQTLSLSQSNQVQNQLNSHSNSNSYPNPSGSE). Basic and acidic residues predominate over residues 69 to 88 (NKNENEQNSRDIRAKPEDKS). Phosphoserine occurs at positions 190 and 194.

Belongs to the choline/ethanolamine kinase family.

Its subcellular location is the cytoplasm. It carries out the reaction ethanolamine + ATP = phosphoethanolamine + ADP + H(+). Its pathway is phospholipid metabolism; phosphatidylethanolamine biosynthesis; phosphatidylethanolamine from ethanolamine: step 1/3. In terms of biological role, highly specific for ethanolamine phosphorylation. May be a rate-controlling step in phosphatidylethanolamine biosynthesis. The chain is Ethanolamine kinase (eas) from Drosophila melanogaster (Fruit fly).